A 64-amino-acid polypeptide reads, in one-letter code: Putative antitoxin VapB4 (64 aa).

This sequence belongs to the UPF0165 family.

In terms of biological role, possibly the antitoxin component of a type II toxin-antitoxin (TA) system. Its cognate toxin is VapC4 (Potential). This Archaeoglobus fulgidus (strain ATCC 49558 / DSM 4304 / JCM 9628 / NBRC 100126 / VC-16) protein is Putative antitoxin VapB4 (vapB4).